The chain runs to 654 residues: Fructose-1,6-bisphosphatase class 3 (654 aa).

The disordered stretch occupies residues 288–307; the sequence is NPAFKPKKRPDKHERLTQRE. Positions 298-307 are enriched in basic and acidic residues; that stretch reads DKHERLTQRE.

This sequence belongs to the FBPase class 3 family. It depends on Mn(2+) as a cofactor.

The catalysed reaction is beta-D-fructose 1,6-bisphosphate + H2O = beta-D-fructose 6-phosphate + phosphate. It functions in the pathway carbohydrate biosynthesis; gluconeogenesis. The protein is Fructose-1,6-bisphosphatase class 3 of Staphylococcus aureus (strain MRSA252).